Reading from the N-terminus, the 464-residue chain is DNA primase DnaG (464 aa).

The region spanning 200–274 (DSIIVVEGRA…DVDYVARAPE (75 aa)) is the Toprim domain. E206, D248, and D250 together coordinate Mg(2+). A compositionally biased stretch (basic and acidic residues) spans 322-332 (NGREEKVREVK). The tract at residues 322–359 (NGREEKVREVKPPAPAPAPAPAPKPIEKPEPKEREEKI) is disordered. Positions 333–345 (PPAPAPAPAPAPK) are enriched in pro residues. Positions 346–359 (PIEKPEPKEREEKI) are enriched in basic and acidic residues.

It belongs to the archaeal DnaG primase family. In terms of assembly, forms a ternary complex with MCM helicase and DNA. Component of the archaeal exosome complex. The cofactor is Mg(2+).

The enzyme catalyses ssDNA + n NTP = ssDNA/pppN(pN)n-1 hybrid + (n-1) diphosphate.. Its function is as follows. RNA polymerase that catalyzes the synthesis of short RNA molecules used as primers for DNA polymerase during DNA replication. Also part of the exosome, which is a complex involved in RNA degradation. Acts as a poly(A)-binding protein that enhances the interaction between heteromeric, adenine-rich transcripts and the exosome. In Thermococcus onnurineus (strain NA1), this protein is DNA primase DnaG.